Reading from the N-terminus, the 367-residue chain is Glutamate 5-kinase (367 aa).

ATP is bound at residue K10. Substrate contacts are provided by S50, D137, and N149. ATP contacts are provided by residues 169-170 and 211-217; these read TD and TGGMGTK. The PUA domain maps to 275 to 353; the sequence is AGEITVDAGA…QQIDAILGYE (79 aa).

Belongs to the glutamate 5-kinase family.

The protein resides in the cytoplasm. It catalyses the reaction L-glutamate + ATP = L-glutamyl 5-phosphate + ADP. It participates in amino-acid biosynthesis; L-proline biosynthesis; L-glutamate 5-semialdehyde from L-glutamate: step 1/2. Catalyzes the transfer of a phosphate group to glutamate to form L-glutamate 5-phosphate. The sequence is that of Glutamate 5-kinase from Klebsiella pneumoniae subsp. pneumoniae (strain ATCC 700721 / MGH 78578).